A 234-amino-acid polypeptide reads, in one-letter code: Inosine triphosphate pyrophosphatase (234 aa).

11-16 (SGNKGK) is a binding site for ITP. Glutamate 40 serves as a coordination point for Mg(2+). Residues lysine 53, 81 to 82 (DT), lysine 98, 176 to 179 (FGWD), lysine 203, and 208 to 209 (HR) each bind ITP.

Belongs to the HAM1 NTPase family. In terms of assembly, homodimer. Mg(2+) is required as a cofactor. Requires Mn(2+) as cofactor.

It is found in the cytoplasm. The enzyme catalyses ITP + H2O = IMP + diphosphate + H(+). The catalysed reaction is dITP + H2O = dIMP + diphosphate + H(+). It catalyses the reaction XTP + H2O = XMP + diphosphate + H(+). Its function is as follows. Pyrophosphatase that hydrolyzes non-canonical purine nucleotides such as inosine triphosphate (ITP), deoxyinosine triphosphate (dITP) or xanthosine 5'-triphosphate (XTP) to their respective monophosphate derivatives. The enzyme does not distinguish between the deoxy- and ribose forms. Probably excludes non-canonical purines from RNA and DNA precursor pools, thus preventing their incorporation into RNA and DNA and avoiding chromosomal lesions. This is Inosine triphosphate pyrophosphatase from Leishmania major.